The primary structure comprises 515 residues: MLSLTIKGKARRRKERAFGDRDFLTFSSKTKKTENVNLSFEKGTRFFDRGGMIFGPSPRSARWPIGIAAFGLCLLFLIKNSGSARESAGNNRKEGVHVAAASAPFLVNRAAGSATTTKERIHFKITNASAMAACGMAGSDLFGYIIQVESGVTGTAGLMENNFHGSVQRALFSLRILRSLRVNSLARIQNFWGPSIPSSSPAKTPLPFGLNIFFDSYMWAPDIYEGSPTPVTAFFSIAPERSISANILRVFIYGSYGATLQQIFFFCSIALRLRSTGAMANEGKASSSIGQLDYGGLYFVLVLMWNREGIQSLLIGLFIYASMDDRCFAIVSALRQTRVKYIADLGALAKTNPISAITFSITMFSYAGIPPLAGFCSKFYLFFAALGCGAYFLAPVGVVTSVIGCWAAGRLPRVSQFGDRRQFSVHRTRSLPNQLRHGWECMLRKIGSSLIHQPSVYSISLYESTITTRDEPWFGEFELALGVIGLPVTAHDRILRCSPPVVGTTRAGPGLNSER.

Transmembrane regions (helical) follow at residues 63–83 (WPIGIAAFGLCLLFLIKNSGS), 250–270 (VFIYGSYGATLQQIFFFCSIA), 299–319 (FVLVLMWNREGIQSLLIGLFI), 356–376 (AITFSITMFSYAGIPPLAGFC), and 379–399 (FYLFFAALGCGAYFLAPVGVV).

The protein belongs to the complex I subunit 2 family.

It is found in the mitochondrion inner membrane. It catalyses the reaction a ubiquinone + NADH + 5 H(+)(in) = a ubiquinol + NAD(+) + 4 H(+)(out). Functionally, core subunit of the mitochondrial membrane respiratory chain NADH dehydrogenase (Complex I) that is believed to belong to the minimal assembly required for catalysis. Complex I functions in the transfer of electrons from NADH to the respiratory chain. The immediate electron acceptor for the enzyme is believed to be ubiquinone. The sequence is that of NADH-ubiquinone oxidoreductase chain 2 (ND2) from Beta vulgaris (Sugar beet).